A 267-amino-acid chain; its full sequence is Indole-3-glycerol phosphate synthase (267 aa).

The protein belongs to the TrpC family.

The enzyme catalyses 1-(2-carboxyphenylamino)-1-deoxy-D-ribulose 5-phosphate + H(+) = (1S,2R)-1-C-(indol-3-yl)glycerol 3-phosphate + CO2 + H2O. It participates in amino-acid biosynthesis; L-tryptophan biosynthesis; L-tryptophan from chorismate: step 4/5. In Cupriavidus taiwanensis (strain DSM 17343 / BCRC 17206 / CCUG 44338 / CIP 107171 / LMG 19424 / R1) (Ralstonia taiwanensis (strain LMG 19424)), this protein is Indole-3-glycerol phosphate synthase.